A 239-amino-acid polypeptide reads, in one-letter code: Thymidylate kinase (239 aa).

10-17 contacts ATP; sequence GVNRVGKS.

Belongs to the thymidylate kinase family.

The enzyme catalyses dTMP + ATP = dTDP + ADP. Its pathway is pyrimidine metabolism; dTTP biosynthesis. Functionally, catalyzes the conversion of dTMP to dTDP. This African swine fever virus (isolate Tick/South Africa/Pretoriuskop Pr4/1996) (ASFV) protein is Thymidylate kinase (TMK).